The chain runs to 464 residues: Argininosuccinate lyase (464 aa).

This sequence belongs to the lyase 1 family. Argininosuccinate lyase subfamily.

The protein resides in the cytoplasm. It catalyses the reaction 2-(N(omega)-L-arginino)succinate = fumarate + L-arginine. The protein operates within amino-acid biosynthesis; L-arginine biosynthesis; L-arginine from L-ornithine and carbamoyl phosphate: step 3/3. Strongly inhibited by L-arginine. Inhibitory effects are lowered at pH 7.0 compared to those at pH 8.0. At 37 degrees Celsius and pH 7.5, activity decreases to 73% and 31% in the presence of 1 mM and 10 mM arginine, respectively. Activity also decreases to 84%, 93%, 82% and 85% in the presence of 10 mM sodium citrate, citrulline, asparatate and glutamate, respectively. Activity decreases to 96% in presence of 1 mM L-lysine. Catalyzes the last step of arginine biosynthesis, the conversion of argininosuccinate into L-arginine and fumarate. The chain is Argininosuccinate lyase from Arthrospira platensis (strain NIES-39 / UTEX 3086 / IAM M-135) (Spirulina platensis).